We begin with the raw amino-acid sequence, 469 residues long: Aspartyl/glutamyl-tRNA(Asn/Gln) amidotransferase subunit B (469 aa).

This sequence belongs to the GatB/GatE family. GatB subfamily. As to quaternary structure, heterotrimer of A, B and C subunits.

It carries out the reaction L-glutamyl-tRNA(Gln) + L-glutamine + ATP + H2O = L-glutaminyl-tRNA(Gln) + L-glutamate + ADP + phosphate + H(+). It catalyses the reaction L-aspartyl-tRNA(Asn) + L-glutamine + ATP + H2O = L-asparaginyl-tRNA(Asn) + L-glutamate + ADP + phosphate + 2 H(+). In terms of biological role, allows the formation of correctly charged Asn-tRNA(Asn) or Gln-tRNA(Gln) through the transamidation of misacylated Asp-tRNA(Asn) or Glu-tRNA(Gln) in organisms which lack either or both of asparaginyl-tRNA or glutaminyl-tRNA synthetases. The reaction takes place in the presence of glutamine and ATP through an activated phospho-Asp-tRNA(Asn) or phospho-Glu-tRNA(Gln). The protein is Aspartyl/glutamyl-tRNA(Asn/Gln) amidotransferase subunit B of Methanococcus maripaludis (strain C5 / ATCC BAA-1333).